Consider the following 868-residue polypeptide: Translation initiation factor IF-2 (868 aa).

2 stretches are compositionally biased toward basic and acidic residues: residues 156-166 and 199-209; these read ETVKEEEKINS and SKKEEVKPEKV. Disordered regions lie at residues 156 to 177 and 199 to 269; these read ETVKEEEKINSEENTAESQDEL and SKKE…KYRE. A compositionally biased stretch (basic residues) spans 249–260; it reads RGGRSKFKKKKG. Positions 368-537 constitute a tr-type G domain; it reads GRAPVVTIMG…LLQSEVLELK (170 aa). The segment at 377-384 is G1; the sequence is GHVDHGKT. 377-384 provides a ligand contact to GTP; that stretch reads GHVDHGKT. The tract at residues 402–406 is G2; that stretch reads GITQH. Residues 423-426 are G3; sequence DTPG. Residues 423 to 427 and 477 to 480 contribute to the GTP site; these read DTPGH and NKMD. Positions 477–480 are G4; that stretch reads NKMD. Residues 513-515 form a G5 region; sequence SAK.

Belongs to the TRAFAC class translation factor GTPase superfamily. Classic translation factor GTPase family. IF-2 subfamily.

It localises to the cytoplasm. In terms of biological role, one of the essential components for the initiation of protein synthesis. Protects formylmethionyl-tRNA from spontaneous hydrolysis and promotes its binding to the 30S ribosomal subunits. Also involved in the hydrolysis of GTP during the formation of the 70S ribosomal complex. The protein is Translation initiation factor IF-2 of Legionella pneumophila subsp. pneumophila (strain Philadelphia 1 / ATCC 33152 / DSM 7513).